A 402-amino-acid polypeptide reads, in one-letter code: Flavohemoprotein (402 aa).

One can recognise a Globin domain in the interval 1-138 (MLSPEVRALV…LADLLIGRER (138 aa)). His85 provides a ligand contact to heme b. Catalysis depends on charge relay system residues Tyr95 and Glu137. The tract at residues 149 to 402 (GGWTGWRAFK…AEVFGTGGVA (254 aa)) is reductase. One can recognise an FAD-binding FR-type domain in the interval 152-261 (TGWRAFKVVR…SPPQGDFTLD (110 aa)). Residues Tyr190 and 206–209 (RQYS) contribute to the FAD site. Residue 274 to 279 (GVGLTP) coordinates NADP(+). Residue 395 to 398 (VFGT) coordinates FAD.

Belongs to the globin family. Two-domain flavohemoproteins subfamily. It in the C-terminal section; belongs to the flavoprotein pyridine nucleotide cytochrome reductase family. Heme b is required as a cofactor. It depends on FAD as a cofactor.

It carries out the reaction 2 nitric oxide + NADPH + 2 O2 = 2 nitrate + NADP(+) + H(+). The enzyme catalyses 2 nitric oxide + NADH + 2 O2 = 2 nitrate + NAD(+) + H(+). Functionally, is involved in NO detoxification in an aerobic process, termed nitric oxide dioxygenase (NOD) reaction that utilizes O(2) and NAD(P)H to convert NO to nitrate, which protects the bacterium from various noxious nitrogen compounds. Therefore, plays a central role in the inducible response to nitrosative stress. In Bordetella pertussis (strain Tohama I / ATCC BAA-589 / NCTC 13251), this protein is Flavohemoprotein.